The sequence spans 142 residues: Large ribosomal subunit protein uL13 (142 aa).

It belongs to the universal ribosomal protein uL13 family. As to quaternary structure, part of the 50S ribosomal subunit.

In terms of biological role, this protein is one of the early assembly proteins of the 50S ribosomal subunit, although it is not seen to bind rRNA by itself. It is important during the early stages of 50S assembly. The protein is Large ribosomal subunit protein uL13 of Lachnospira eligens (strain ATCC 27750 / DSM 3376 / VPI C15-48 / C15-B4) (Eubacterium eligens).